The sequence spans 244 residues: tRNA pseudouridine synthase A (244 aa).

The Nucleophile role is filled by D52. Substrate is bound at residue Y110.

The protein belongs to the tRNA pseudouridine synthase TruA family. Homodimer.

The enzyme catalyses uridine(38/39/40) in tRNA = pseudouridine(38/39/40) in tRNA. Functionally, formation of pseudouridine at positions 38, 39 and 40 in the anticodon stem and loop of transfer RNAs. The polypeptide is tRNA pseudouridine synthase A (Caldicellulosiruptor saccharolyticus (strain ATCC 43494 / DSM 8903 / Tp8T 6331)).